The chain runs to 219 residues: Ribose-5-phosphate isomerase A (219 aa).

Substrate contacts are provided by residues 28–31 (SGST), 81–84 (DGAD), and 94–97 (KGGG). The Proton acceptor role is filled by Glu103. Lys121 is a binding site for substrate.

This sequence belongs to the ribose 5-phosphate isomerase family. In terms of assembly, homodimer.

It catalyses the reaction aldehydo-D-ribose 5-phosphate = D-ribulose 5-phosphate. Its pathway is carbohydrate degradation; pentose phosphate pathway; D-ribose 5-phosphate from D-ribulose 5-phosphate (non-oxidative stage): step 1/1. Catalyzes the reversible conversion of ribose-5-phosphate to ribulose 5-phosphate. The polypeptide is Ribose-5-phosphate isomerase A (Histophilus somni (strain 129Pt) (Haemophilus somnus)).